A 365-amino-acid polypeptide reads, in one-letter code: Adenosine deaminase (365 aa).

The Zn(2+) site is built by His-19 and His-21. Substrate contacts are provided by His-21, Asp-23, and Gly-181. A Zn(2+)-binding site is contributed by His-208. Glu-211 acts as the Proton donor in catalysis. Residue Asp-300 coordinates Zn(2+).

Belongs to the metallo-dependent hydrolases superfamily. Adenosine and AMP deaminases family. Adenosine deaminase subfamily. The cofactor is Zn(2+).

The catalysed reaction is adenosine + H2O + H(+) = inosine + NH4(+). It catalyses the reaction 2'-deoxyadenosine + H2O + H(+) = 2'-deoxyinosine + NH4(+). In terms of biological role, catalyzes the hydrolytic deamination of adenosine and 2-deoxyadenosine. This is Adenosine deaminase from Mycobacterium tuberculosis (strain ATCC 25177 / H37Ra).